The following is a 301-amino-acid chain: Methionyl-tRNA formyltransferase (301 aa).

110 to 113 (SLLP) contacts (6S)-5,6,7,8-tetrahydrofolate.

This sequence belongs to the Fmt family.

It carries out the reaction L-methionyl-tRNA(fMet) + (6R)-10-formyltetrahydrofolate = N-formyl-L-methionyl-tRNA(fMet) + (6S)-5,6,7,8-tetrahydrofolate + H(+). Its function is as follows. Attaches a formyl group to the free amino group of methionyl-tRNA(fMet). The formyl group appears to play a dual role in the initiator identity of N-formylmethionyl-tRNA by promoting its recognition by IF2 and preventing the misappropriation of this tRNA by the elongation apparatus. The chain is Methionyl-tRNA formyltransferase from Anaplasma phagocytophilum (strain HZ).